The sequence spans 655 residues: D-xylonate dehydratase YagF (655 aa).

This sequence belongs to the IlvD/Edd family.

It catalyses the reaction D-xylonate = 2-dehydro-3-deoxy-D-arabinonate + H2O. Functionally, catalyzes the dehydration of D-xylonic acid to form 2-dehydro-3-deoxy-D-pentonate. This chain is D-xylonate dehydratase YagF (yagF), found in Escherichia coli (strain K12).